An 84-amino-acid polypeptide reads, in one-letter code: Toxin Aah4 (84 aa).

An N-terminal signal peptide occupies residues 1-19 (MNYLIMFSLALLLVIGVES). Positions 21-82 (RDGYIVDSKN…PIKDPSDDCH (62 aa)) constitute an LCN-type CS-alpha/beta domain. 4 disulfides stabilise this stretch: C31-C81, C35-C53, C39-C63, and C43-C65. A propeptide (removed by a carboxypeptidase) is located at residue R84.

This sequence belongs to the long (4 C-C) scorpion toxin superfamily. Sodium channel inhibitor family. Alpha subfamily. In terms of tissue distribution, expressed by the venom gland.

Its subcellular location is the secreted. Alpha toxins bind voltage-independently at site-3 of sodium channels (Nav) and inhibit the inactivation of the activated channels, thereby blocking neuronal transmission. This toxin seems to specifically act on Nav1.6/SCN8A sodium channel. In vitro, it inhibits the proliferation of the prostate cancer cell line DU145 (IC(50)=15 uM). It shows low effect on the adhesion of DU145 cells to fibronectin (at 15 uM) and is inactive on DU145 cells migration. The protein is Toxin Aah4 of Androctonus australis (Sahara scorpion).